The sequence spans 148 residues: UPF0756 membrane protein YeaL (148 aa).

The next 4 membrane-spanning stretches (helical) occupy residues 14–34 (ALGF…LIIV), 51–71 (LSIG…SGTL), 86–106 (LVAI…VTLM), and 121–141 (VLGV…AGLV).

The protein belongs to the UPF0756 family.

The protein resides in the cell membrane. This chain is UPF0756 membrane protein YeaL, found in Shigella flexneri.